Consider the following 62-residue polypeptide: uncharacterized protein (62 aa).

Positions 1–19 are cleaved as a signal peptide; the sequence is MKLIILLFVVAAFVTLAMG.

This is an uncharacterized protein from Lepidoptera (butterflies and moths).